We begin with the raw amino-acid sequence, 229 residues long: MNQWEELQESVGFDFQNVELLQQAFTHSSYVNEHRRENVKDNERLEFLGDAVLELTVSDYLFNKYPDMAEGHMTKMRAAIVCEPSLVEFAEAVHFSKYVRLGKGEEKAGGRTRPALLADVFESFIGALYLDNGIDKVVKFLERVIFPKIDAGAYLQTVDYKTQLQEIVQRDRDVLIEYDILGETGPAHNKAFDAQVIVNGQVLGKGSGRTKKQAEQSAAQFAINQLTHR.

The RNase III domain occupies Trp-4–Gly-133. Glu-46 contacts Mg(2+). Residue Asp-50 is part of the active site. Mg(2+) is bound by residues Asp-119 and Glu-122. Glu-122 is an active-site residue. Residues Asp-159–His-228 enclose the DRBM domain.

Belongs to the ribonuclease III family. In terms of assembly, homodimer. Requires Mg(2+) as cofactor.

The protein localises to the cytoplasm. The catalysed reaction is Endonucleolytic cleavage to 5'-phosphomonoester.. Functionally, digests double-stranded RNA. Involved in the processing of primary rRNA transcript to yield the immediate precursors to the large and small rRNAs (23S and 16S). Processes some mRNAs, and tRNAs when they are encoded in the rRNA operon. Processes pre-crRNA and tracrRNA of type II CRISPR loci if present in the organism. This Listeria innocua serovar 6a (strain ATCC BAA-680 / CLIP 11262) protein is Ribonuclease 3.